Reading from the N-terminus, the 577-residue chain is Hemagglutinin-neuraminidase (577 aa).

Met-1 carries the post-translational modification Blocked amino end (Met); by host. The Intravirion segment spans residues Met-1–Arg-26. The chain crosses the membrane as a helical span at residues Ile-27 to Met-48. The Virion surface portion of the chain corresponds to Gly-49 to Gly-577. Asn-119 carries an N-linked (GlcNAc...) asparagine; by host glycan. The interval Gly-124–Tyr-152 is important for interaction with fusion/F protein. Cystine bridges form between Cys-172–Cys-196, Cys-186–Cys-247, and Cys-238–Cys-251. An involved in neuraminidase activity region spans residues Asn-234–Ser-239. Asn-341 and Asn-433 each carry an N-linked (GlcNAc...) asparagine; by host glycan. Disulfide bonds link Cys-344-Cys-461 and Cys-455-Cys-465. N-linked (GlcNAc...) asparagine; by host glycans are attached at residues Asn-481 and Asn-538. A disulfide bridge links Cys-531 with Cys-542.

Belongs to the paramyxoviruses hemagglutinin-neuraminidase family. Homotetramer; composed of disulfide-linked homodimers. Interacts with F protein trimer. Interacts with host CG-1B; this interaction inhibits viral adsorption and replication rather than internalization.

It localises to the virion membrane. Its subcellular location is the host cell membrane. It catalyses the reaction Hydrolysis of alpha-(2-&gt;3)-, alpha-(2-&gt;6)-, alpha-(2-&gt;8)- glycosidic linkages of terminal sialic acid residues in oligosaccharides, glycoproteins, glycolipids, colominic acid and synthetic substrates.. Functionally, mediates the viral entry into the host cell together with fusion/F protein. Attaches the virus to sialic acid-containing cell receptors and thereby initiates infection. Binding of HN protein to the receptor induces a conformational change that allows the F protein to trigger virion/cell membranes fusion. In terms of biological role, neuraminidase activity ensures the efficient spread of the virus by dissociating the mature virions from the neuraminic acid containing glycoproteins. The sequence is that of Hemagglutinin-neuraminidase (HN) from Gallus gallus (Chicken).